Consider the following 308-residue polypeptide: tRNA dimethylallyltransferase (308 aa).

Gly-17–Ser-24 lines the ATP pocket. Thr-19–Ser-24 lines the substrate pocket.

This sequence belongs to the IPP transferase family. As to quaternary structure, monomer. Requires Mg(2+) as cofactor.

It catalyses the reaction adenosine(37) in tRNA + dimethylallyl diphosphate = N(6)-dimethylallyladenosine(37) in tRNA + diphosphate. Its function is as follows. Catalyzes the transfer of a dimethylallyl group onto the adenine at position 37 in tRNAs that read codons beginning with uridine, leading to the formation of N6-(dimethylallyl)adenosine (i(6)A). The chain is tRNA dimethylallyltransferase from Paenarthrobacter aurescens (strain TC1).